The chain runs to 452 residues: Neuronal acetylcholine receptor subunit alpha-5 (452 aa).

The N-terminal stretch at 1 to 27 is a signal peptide; sequence MVQLLAGRWRPTGARRGTRGGLPELSS. Over 28-239 the chain is Extracellular; the sequence is AAKHEDSLFR…VIKRLPLFYT (212 aa). Residues asparagine 140, asparagine 168, and asparagine 214 are each glycosylated (N-linked (GlcNAc...) asparagine). The cysteines at positions 155 and 169 are disulfide-linked. A disulfide bond links cysteine 219 and cysteine 220. Helical transmembrane passes span 240-260, 269-289, and 302-322; these read LFLI…FYLP, LCTS…EIIP, and LVFT…AINI. Topologically, residues 323 to 414 are cytoplasmic; that stretch reads HHRSSSTHNA…KFIAQVLDRM (92 aa). Residues 415 to 435 form a helical membrane-spanning segment; sequence FLWTFLLVSIIGTLGLFVPVI. Topologically, residues 436–452 are extracellular; the sequence is YKWANIIVPVHIGNTIK.

The protein belongs to the ligand-gated ion channel (TC 1.A.9) family. Acetylcholine receptor (TC 1.A.9.1) subfamily. Alpha-5/CHRNA5 sub-subfamily. In terms of assembly, neuronal AChR that forms heteropentamers composed of two different type of subunits: alpha and non-alpha (beta). CHRNA5/alpha-5 subunit is only able to form functional nAChRs when co-assembled with another alpha subunit, can be combined to CHRNA4/alpha-4 or CHRNA3/alpha-3 and CHRNB4/beta-4 or CHRNB2/beta-2 to give rise to functional receptors. Interacts with LYPD6.

Its subcellular location is the synaptic cell membrane. The protein localises to the cell membrane. It catalyses the reaction Ca(2+)(in) = Ca(2+)(out). The catalysed reaction is K(+)(in) = K(+)(out). The enzyme catalyses Na(+)(in) = Na(+)(out). With respect to regulation, activated by a myriad of ligands such as acetylcholine, cytisine, nicotine, choline and epibatidine. In terms of biological role, component of neuronal acetylcholine receptors (nAChRs) that function as pentameric, ligand-gated cation channels with high calcium permeability among other activities. nAChRs are excitatory neurotrasnmitter receptors formed by a collection of nAChR subunits known to mediate synaptic transmission in the nervous system and the neuromuscular junction. Each nAchR subunit confers differential attributes to channel properties, including activation, deactivation and desensitization kinetics, pH sensitivity, cation permeability, and binding to allosteric modulators. Has an accessory rather than functional role and is only able to form functional nAChRs when co-assembled with another beta subunit. Participates in pentameric assemblies along with CHRNA3, CHRNA4, CHRNB2 and CHRNB4. Increases receptor sensitivity to acetylcholine and nicotine when associated with CHRNA4 and CHRNB2. Plays a role in nicotine addiction. The polypeptide is Neuronal acetylcholine receptor subunit alpha-5 (Chrna5) (Rattus norvegicus (Rat)).